Reading from the N-terminus, the 482-residue chain is Glycogen synthase (482 aa).

K15 provides a ligand contact to ADP-alpha-D-glucose.

Belongs to the glycosyltransferase 1 family. Bacterial/plant glycogen synthase subfamily.

It carries out the reaction [(1-&gt;4)-alpha-D-glucosyl](n) + ADP-alpha-D-glucose = [(1-&gt;4)-alpha-D-glucosyl](n+1) + ADP + H(+). It functions in the pathway glycan biosynthesis; glycogen biosynthesis. Its function is as follows. Synthesizes alpha-1,4-glucan chains using ADP-glucose. This is Glycogen synthase from Hydrogenobaculum sp. (strain Y04AAS1).